A 155-amino-acid polypeptide reads, in one-letter code: Endoribonuclease YbeY (155 aa).

Zn(2+) is bound by residues His-117, His-121, and His-127.

Belongs to the endoribonuclease YbeY family. Requires Zn(2+) as cofactor.

It localises to the cytoplasm. Functionally, single strand-specific metallo-endoribonuclease involved in late-stage 70S ribosome quality control and in maturation of the 3' terminus of the 16S rRNA. The chain is Endoribonuclease YbeY from Psychrobacter cryohalolentis (strain ATCC BAA-1226 / DSM 17306 / VKM B-2378 / K5).